The sequence spans 265 residues: Sulfur carrier protein FdhD (265 aa).

Cys-107 serves as the catalytic Cysteine persulfide intermediate.

It belongs to the FdhD family.

The protein localises to the cytoplasm. Its function is as follows. Required for formate dehydrogenase (FDH) activity. Acts as a sulfur carrier protein that transfers sulfur from IscS to the molybdenum cofactor prior to its insertion into FDH. This Staphylococcus aureus (strain JH9) protein is Sulfur carrier protein FdhD.